The following is an 82-amino-acid chain: DNA-directed RNA polymerase subunit Rpo5 (82 aa).

It belongs to the archaeal Rpo5/eukaryotic RPB5 RNA polymerase subunit family. In terms of assembly, part of the RNA polymerase complex.

Its subcellular location is the cytoplasm. The enzyme catalyses RNA(n) + a ribonucleoside 5'-triphosphate = RNA(n+1) + diphosphate. In terms of biological role, DNA-dependent RNA polymerase (RNAP) catalyzes the transcription of DNA into RNA using the four ribonucleoside triphosphates as substrates. This Thermococcus onnurineus (strain NA1) protein is DNA-directed RNA polymerase subunit Rpo5.